Consider the following 199-residue polypeptide: Tropomyosin-1 (199 aa).

A coiled-coil region spans residues 1–199; that stretch reads MDKIREKLSN…DEIAASLENL (199 aa). Glycyl lysine isopeptide (Lys-Gly) (interchain with G-Cter in ubiquitin) cross-links involve residues Lys39 and Lys59. Disordered stretches follow at residues 59-81 and 102-147; these read KLEA…ENQI and LAES…TEKL. Basic and acidic residues-rich tracts occupy residues 68–80 and 102–114; these read KQTE…KENQ and LAES…DSHH. Residues 115–126 show a composition bias toward polar residues; it reads LQSNNDNFSKKN. Over residues 136–147 the composition is skewed to basic and acidic residues; the sequence is SDTKLKETTEKL. Lys187 is covalently cross-linked (Glycyl lysine isopeptide (Lys-Gly) (interchain with G-Cter in ubiquitin)). At Ser195 the chain carries Phosphoserine.

Homodimer.

It is found in the cytoplasm. Its subcellular location is the cytoskeleton. The sequence is that of Tropomyosin-1 (TPM1) from Saccharomyces cerevisiae (strain ATCC 204508 / S288c) (Baker's yeast).